The sequence spans 219 residues: ATP phosphoribosyltransferase (219 aa).

This sequence belongs to the ATP phosphoribosyltransferase family. Short subfamily. Heteromultimer composed of HisG and HisZ subunits.

The protein resides in the cytoplasm. The catalysed reaction is 1-(5-phospho-beta-D-ribosyl)-ATP + diphosphate = 5-phospho-alpha-D-ribose 1-diphosphate + ATP. It participates in amino-acid biosynthesis; L-histidine biosynthesis; L-histidine from 5-phospho-alpha-D-ribose 1-diphosphate: step 1/9. In terms of biological role, catalyzes the condensation of ATP and 5-phosphoribose 1-diphosphate to form N'-(5'-phosphoribosyl)-ATP (PR-ATP). Has a crucial role in the pathway because the rate of histidine biosynthesis seems to be controlled primarily by regulation of HisG enzymatic activity. In Paramagnetospirillum magneticum (strain ATCC 700264 / AMB-1) (Magnetospirillum magneticum), this protein is ATP phosphoribosyltransferase.